We begin with the raw amino-acid sequence, 193 residues long: MTPLALIMIIIAYLLGSISSAVLICRLRGLPDPRTSGSQNPGATNVFRLGGKGAAGLVLLCDILKGMLPVWGGYFLESNPLLLGIIAIAACLGHMYPLFFHFKGGKGVATALGALAPIGLDLTGLLFGTWVVIVLITGYSSLASMATALLAPLFTWLVKPQYTLPVAMLSCLIVLKHHENIRRFFAGKEKKIW.

Transmembrane regions (helical) follow at residues 4–24 (LALI…AVLI), 56–76 (GLVL…GYFL), 80–100 (PLLL…PLFF), 116–136 (APIG…IVLI), and 152–174 (PLFT…CLIV).

Belongs to the PlsY family. As to quaternary structure, probably interacts with PlsX.

It is found in the cell inner membrane. The catalysed reaction is an acyl phosphate + sn-glycerol 3-phosphate = a 1-acyl-sn-glycero-3-phosphate + phosphate. Its pathway is lipid metabolism; phospholipid metabolism. Its function is as follows. Catalyzes the transfer of an acyl group from acyl-phosphate (acyl-PO(4)) to glycerol-3-phosphate (G3P) to form lysophosphatidic acid (LPA). This enzyme utilizes acyl-phosphate as fatty acyl donor, but not acyl-CoA or acyl-ACP. This chain is Glycerol-3-phosphate acyltransferase, found in Aliivibrio salmonicida (strain LFI1238) (Vibrio salmonicida (strain LFI1238)).